The sequence spans 289 residues: 2-hydroxy-6-oxononadienedioate/2-hydroxy-6-oxononatrienedioate hydrolase (289 aa).

Residues 39–275 (TVVMLHGSGP…RCGHWAQWEH (237 aa)) enclose the AB hydrolase-1 domain. The active-site Proton acceptor is the H269.

This sequence belongs to the AB hydrolase superfamily. MhpC family. In terms of assembly, homodimer.

The enzyme catalyses (2Z,4E)-2-hydroxy-6-oxonona-2,4-dienedioate + H2O = (2Z)-2-hydroxypenta-2,4-dienoate + succinate + H(+). It carries out the reaction (2Z,4E,7E)-2-hydroxy-6-oxonona-2,4,7-trienedioate + H2O = (2Z)-2-hydroxypenta-2,4-dienoate + fumarate + H(+). It functions in the pathway aromatic compound metabolism; 3-phenylpropanoate degradation. Its function is as follows. Catalyzes the cleavage of the C5-C6 bond of 2-hydroxy-6-oxononadienedioate and 2-hydroxy-6-oxononatrienedioate, a dienol ring fission product of the bacterial meta-cleavage pathway for degradation of phenylpropionic acid. The protein is 2-hydroxy-6-oxononadienedioate/2-hydroxy-6-oxononatrienedioate hydrolase of Paraburkholderia xenovorans (strain LB400).